The primary structure comprises 97 residues: Co-chaperonin GroES (97 aa).

Belongs to the GroES chaperonin family. In terms of assembly, heptamer of 7 subunits arranged in a ring. Interacts with the chaperonin GroEL.

Its subcellular location is the cytoplasm. Together with the chaperonin GroEL, plays an essential role in assisting protein folding. The GroEL-GroES system forms a nano-cage that allows encapsulation of the non-native substrate proteins and provides a physical environment optimized to promote and accelerate protein folding. GroES binds to the apical surface of the GroEL ring, thereby capping the opening of the GroEL channel. This is Co-chaperonin GroES from Buchnera aphidicola subsp. Tuberolachnus salignus.